A 439-amino-acid chain; its full sequence is MFFHATLARSFISALSVRGDDDAVDRLNYYYTPLILAVCCLVISAKQYGGTPIECWVNPHSRESMEEYIESYCWIQNTYWIPMYENVPDDHTAREEKQIGYYQWVPFILIAEALMFSLPCIFWRLCSFQSGLNIQTLINAACDAQALLDYSDRQKAVEAITCNFVDNLDLQSPNGRIRARGWIARIKFSRFLSGQCISIVYSFTKLLYSVNVVAQFFILNACLKSSEFVFFGFQVLSDIWAGRPWTETGHFPRVTLCDFEVRYLANLNRYTVQCALLINIINEKVFAFLWCWYMILAIITTCSFIYWIANSFIHSEKVDYVMKFIQIAESSEYKKLQKFEKDATVERLYTVIAFAPHLLDSFVSDFLKSDGILMLRMISNHAGDMIVVQLVRNLWQEYRERNWREFEEHEEMKDVEMRRIQGTRERIVIANPGQTKSFL.

Helical transmembrane passes span 33–53 (PLIL…GTPI), 103–123 (QWVP…CIFW), 199–219 (IVYS…FFIL), and 285–305 (VFAF…CSFI).

This sequence belongs to the pannexin family.

The protein resides in the cell membrane. Its subcellular location is the cell junction. It localises to the gap junction. Its function is as follows. Structural component of the gap junctions that specifically coordinates left-right asymmetry in the developing nervous system. Acts by forming gap junction network linking embryonic neurons and providing electrical coupling between cells, leading to promote or inhibit AWC signaling. In Caenorhabditis briggsae, this protein is Innexin-19 (inx-19).